Here is a 111-residue protein sequence, read N- to C-terminus: Glutaredoxin-C2 (111 aa).

A Glutaredoxin domain is found at Met-3–Ala-103. A disulfide bridge connects residues Cys-23 and Cys-26.

This sequence belongs to the glutaredoxin family. CPYC subfamily.

It is found in the cytoplasm. Its function is as follows. Has a glutathione-disulfide oxidoreductase activity in the presence of NADPH and glutathione reductase. Reduces low molecular weight disulfides and proteins. The polypeptide is Glutaredoxin-C2 (GRXC2) (Arabidopsis thaliana (Mouse-ear cress)).